The chain runs to 406 residues: Large ribosomal subunit protein uL4z (406 aa).

The disordered stretch occupies residues 56–95; the sequence is PYAVSKKAGHQTSAESWGTGRAVSRIPRVPGGGTHRAGQA.

This sequence belongs to the universal ribosomal protein uL4 family.

The chain is Large ribosomal subunit protein uL4z (RPL4A) from Arabidopsis thaliana (Mouse-ear cress).